Here is a 237-residue protein sequence, read N- to C-terminus: Oligoribonuclease, mitochondrial (237 aa).

The N-terminal 25 residues, 1–25, are a transit peptide targeting the mitochondrion; that stretch reads MLGGSLGSRLLRGVGGTRGQFRARG. In terms of domain architecture, Exonuclease spans 43-207; the sequence is MVWVDLEMTG…DDISESIKEL (165 aa). 2 residues coordinate Mg(2+): Asp47 and Glu49. Ser92 carries the post-translational modification Phosphoserine. Tyr122 carries the phosphotyrosine modification. Residue Asp147 coordinates Mg(2+). Lys173 carries the post-translational modification N6-acetyllysine. Residue His194 is part of the active site. Residue Asp199 participates in Mg(2+) binding.

This sequence belongs to the oligoribonuclease family. In terms of assembly, homodimer. Homotetramer. Mn(2+) serves as cofactor. The cofactor is Mg(2+).

Its subcellular location is the mitochondrion intermembrane space. It localises to the mitochondrion matrix. It is found in the mitochondrion. The protein localises to the cytoplasm. The protein resides in the nucleus. 3'-to-5'exoribonuclease that preferentially degrades DNA and RNA oligonucleotides composed of only two nucleotides. Binds and degrades longer oligonucleotides with a lower affinity. Plays dual roles in mitochondria, scavenging nanoRNAs (small RNA oligonucleotides of &lt;5 nucleotides) that are produced by the degradosome and clearing short RNAs that are generated by RNA processing. Essential for correct initiation of mitochondrial transcription, degrading mitochondrial RNA dinucleotides to prevent RNA-primed transcription at non-canonical sites in the mitochondrial genome. Essential for embryonic development. This Bos taurus (Bovine) protein is Oligoribonuclease, mitochondrial (REXO2).